A 462-amino-acid polypeptide reads, in one-letter code: MTVIGIDDTDSRNRGMCTTYLATRIATAIEHAGGTVERRLLIRLNPAVEHKTRGNAAIALHTDIDPTDAVEISTQFIDSLAISDDPNTSPGVVITDTCTPHSVADSVIDFCWDAIREFHTIADTVDLIEQVGYHHQGWDGGRGRIGALAAVGAWAALTEWTIEHIAYRQFNRCGTDRDVDEKSVFEAAKRQYPAVWDTVDREEDDAVCVPNAPGPILYGIRGDDVAAVKTVAAEIDSEPVERSSTFITNQGTDIHLRPGTIGSLRDNRAYRVTGTVITDPETRPGGHVFVTLGKRETTEEDHIEETSSKESAVLTDTHHLRTKSSNPDITDQNVSSTITCVAFEPTKRFRQWVRKLRVGDIITVCGEVSNGTLKLEKFAIRSLTRTTKTAPICPGCNRTMKSAGRNQGYRCRDCGTSSSTQSEKSLDRVLSLKWYEVPPCARRHIAQPLIRGDFDAPIMPER.

This sequence belongs to the TiaS family.

It is found in the cytoplasm. It carries out the reaction cytidine(34) in tRNA(Ile2) + agmatine + ATP + H2O = 2-agmatinylcytidine(34) in tRNA(Ile2) + AMP + 2 phosphate + 2 H(+). Its function is as follows. ATP-dependent agmatine transferase that catalyzes the formation of 2-agmatinylcytidine (agm2C) at the wobble position (C34) of tRNA(Ile2), converting the codon specificity from AUG to AUA. This chain is tRNA(Ile2) 2-agmatinylcytidine synthetase TiaS, found in Haloquadratum walsbyi (strain DSM 16790 / HBSQ001).